A 412-amino-acid polypeptide reads, in one-letter code: Gamma-glutamyl phosphate reductase (412 aa).

This sequence belongs to the gamma-glutamyl phosphate reductase family.

Its subcellular location is the cytoplasm. It carries out the reaction L-glutamate 5-semialdehyde + phosphate + NADP(+) = L-glutamyl 5-phosphate + NADPH + H(+). It participates in amino-acid biosynthesis; L-proline biosynthesis; L-glutamate 5-semialdehyde from L-glutamate: step 2/2. Functionally, catalyzes the NADPH-dependent reduction of L-glutamate 5-phosphate into L-glutamate 5-semialdehyde and phosphate. The product spontaneously undergoes cyclization to form 1-pyrroline-5-carboxylate. The polypeptide is Gamma-glutamyl phosphate reductase (Streptococcus suis (strain 98HAH33)).